A 157-amino-acid polypeptide reads, in one-letter code: Small ribosomal subunit protein uS7 (157 aa).

Belongs to the universal ribosomal protein uS7 family. Part of the 30S ribosomal subunit. Contacts proteins S9 and S11.

Its function is as follows. One of the primary rRNA binding proteins, it binds directly to 16S rRNA where it nucleates assembly of the head domain of the 30S subunit. Is located at the subunit interface close to the decoding center, probably blocks exit of the E-site tRNA. The protein is Small ribosomal subunit protein uS7 of Chlamydia muridarum (strain MoPn / Nigg).